Reading from the N-terminus, the 325-residue chain is Beta-ketoacyl-[acyl-carrier-protein] synthase III (325 aa).

Catalysis depends on residues Cys-119 and His-252. Positions 253–257 (QANIR) are ACP-binding. Asn-282 is a catalytic residue.

Belongs to the thiolase-like superfamily. FabH family. As to quaternary structure, homodimer.

It is found in the cytoplasm. It carries out the reaction malonyl-[ACP] + acetyl-CoA + H(+) = 3-oxobutanoyl-[ACP] + CO2 + CoA. Its pathway is lipid metabolism; fatty acid biosynthesis. Its function is as follows. Catalyzes the condensation reaction of fatty acid synthesis by the addition to an acyl acceptor of two carbons from malonyl-ACP. Catalyzes the first condensation reaction which initiates fatty acid synthesis and may therefore play a role in governing the total rate of fatty acid production. Possesses both acetoacetyl-ACP synthase and acetyl transacylase activities. Its substrate specificity determines the biosynthesis of branched-chain and/or straight-chain of fatty acids. The polypeptide is Beta-ketoacyl-[acyl-carrier-protein] synthase III (Verminephrobacter eiseniae (strain EF01-2)).